Consider the following 500-residue polypeptide: Probable cytosol aminopeptidase (500 aa).

2 residues coordinate Mn(2+): Lys-262 and Asp-267. Lys-274 is a catalytic residue. The Mn(2+) site is built by Asp-285, Asp-344, and Glu-346. Arg-348 is a catalytic residue.

Belongs to the peptidase M17 family. It depends on Mn(2+) as a cofactor.

The protein localises to the cytoplasm. The enzyme catalyses Release of an N-terminal amino acid, Xaa-|-Yaa-, in which Xaa is preferably Leu, but may be other amino acids including Pro although not Arg or Lys, and Yaa may be Pro. Amino acid amides and methyl esters are also readily hydrolyzed, but rates on arylamides are exceedingly low.. It carries out the reaction Release of an N-terminal amino acid, preferentially leucine, but not glutamic or aspartic acids.. Functionally, presumably involved in the processing and regular turnover of intracellular proteins. Catalyzes the removal of unsubstituted N-terminal amino acids from various peptides. In Ehrlichia ruminantium (strain Welgevonden), this protein is Probable cytosol aminopeptidase.